Reading from the N-terminus, the 382-residue chain is Porphobilinogen deaminase, chloroplastic (382 aa).

A chloroplast-targeting transit peptide spans 1-62 (MDIASSSLSQ…KQSSSGFVKA (62 aa)). Arg-80 and Ser-82 together coordinate dipyrromethane. Ser-123 is modified (phosphoserine). Dipyrromethane-binding positions include 156 to 157 (KD), 200 to 206 (TASLRRK), and 223 to 229 (RGNVQTR). Catalysis depends on Asp-157, which acts as the Proton donor/acceptor. An S-(dipyrrolylmethanemethyl)cysteine modification is found at Cys-316.

This sequence belongs to the HMBS family. In terms of assembly, monomer. Dipyrromethane serves as cofactor.

The protein localises to the plastid. It localises to the chloroplast. The catalysed reaction is 4 porphobilinogen + H2O = hydroxymethylbilane + 4 NH4(+). It participates in porphyrin-containing compound metabolism; protoporphyrin-IX biosynthesis; coproporphyrinogen-III from 5-aminolevulinate: step 2/4. The protein operates within porphyrin-containing compound metabolism; chlorophyll biosynthesis. Inhibited by NH(3), heavy-metal ions, hydroxylamine and 2-bromoporphobilinogen. Not inhibited by N-ethylmaleimide. Its function is as follows. Tetrapolymerization of the monopyrrole PBG into the hydroxymethylbilane pre-uroporphyrinogen in several discrete steps. The chain is Porphobilinogen deaminase, chloroplastic (HEMC) from Arabidopsis thaliana (Mouse-ear cress).